Here is a 439-residue protein sequence, read N- to C-terminus: Protein PHYTOCHROME KINASE SUBSTRATE 1 (439 aa).

The segment covering 1 to 14 has biased composition (polar residues); that stretch reads MVTLTPSSASTPKT. 3 disordered regions span residues 1–22, 54–80, and 100–139; these read MVTL…MKNN, KTLN…APED, and QGSS…SSWN. Residues 63–79 show a composition bias toward basic and acidic residues; sequence KQEEFGDEKKMVKKAPE. Polar residues-rich tracts occupy residues 100–109 and 118–139; these read QGSSVLSLTN and DSKQ…SSWN. Residues Ser238 and Ser244 each carry the phosphoserine modification. Disordered stretches follow at residues 259–311 and 355–439; these read LPLP…PTCY and TAKS…LYSQ. Residues 412–421 show a composition bias toward basic and acidic residues; sequence TKPKSFETRR. Residues 424–439 are compositionally biased toward low complexity; it reads SNSSISHTQSSLLYSQ.

The protein belongs to the PKS family. As to quaternary structure, interacts with PKS2, RPT3, PHOT1, PHOT2 and the C-termini of both phytochromes A (phyA) and B (phyB). Binds both spectral forms of phytochrome, Pr and Pfr. Post-translationally, phosphorylated on Ser and to a lower extent on Thr by phytochromes. Phosphorylation is stimulated twofold by red light. Expressed in young seedlings in both darkness and light. Moderate in leaves and very low in roots and flowers. Expressed in the elongation zone of the root and hypocotyl.

It is found in the cell membrane. Its function is as follows. May be responsible for light-regulated cytoplasmic sequestration of phytochromes or may be a negative regulator of phytochrome B signaling. Component of the network that modulates the very low-fluence response (VLFR) branch of phyA signaling. Acts positively in PHOT1 signaling. Regulates phytochrome-mediated photomorphogenesis and hypocotyl phototropism. Involved in the control of leaf flattening and leaf positioning. Promotes negative root phototropism and negatively regulates root gravitropism. May act by controlling auxin homeostasis. This is Protein PHYTOCHROME KINASE SUBSTRATE 1 (PKS1) from Arabidopsis thaliana (Mouse-ear cress).